A 317-amino-acid polypeptide reads, in one-letter code: NAC domain-containing protein 55 (317 aa).

The region spanning 14-162 (LPPGFRFYPT…DWVLCRIYKK (149 aa)) is the NAC domain. The DNA-binding element occupies 111–168 (VGIKKALVFYIGKAPKGTKTNWIMHEYRLIEPSRRNGSTKLDDWVLCRIYKKQTSAQK).

As to expression, expressed in leaves.

The protein resides in the nucleus. Transcription factors that bind specifically to the 5'-CATGTG-3' motif. This is NAC domain-containing protein 55 (NAC055) from Arabidopsis thaliana (Mouse-ear cress).